A 1308-amino-acid polypeptide reads, in one-letter code: Chromosome partition protein Smc (1308 aa).

34–41 (PNGCGKSN) is a binding site for ATP. Positions 115 to 181 (AAREASMEEV…VAEGQPSDAQ (67 aa)) are disordered. Residues 137-169 (TEAEATEQQAAPSEGAAPTTEATAPSTENEAAP) show a composition bias toward low complexity. Residues 278-600 (ITKYKTKKRL…DTLRAEYATL (323 aa)) adopt a coiled-coil conformation. In terms of domain architecture, SMC hinge spans 637–757 (AGVLADFLEV…VPDPAIGREL (121 aa)). 2 coiled-coil regions span residues 791-1046 (SLKR…ELHA) and 1110-1148 (MALE…EIDQ).

It belongs to the SMC family. In terms of assembly, homodimer.

The protein resides in the cytoplasm. Its function is as follows. Required for chromosome condensation and partitioning. This is Chromosome partition protein Smc from Koribacter versatilis (strain Ellin345).